We begin with the raw amino-acid sequence, 245 residues long: MPFELKRPDRNHLLHHFKTIPGNPPVEWKISNNLIEYPEALHYMQEHVENIFAQNAPEQVWLLEHPSLYTAGTSAKKKDLLAPHLFPVYEAGRGGEFTYHGPGQRIAYIMLDLKRRRQDIRAFIGALEEWIIQTLAKFNIKGERREDRVGVWVKRPNYPFTQSGFSPEDKIAAIGIRVRKWVSFHGVSINVNPNLAHYSGIVPCGITEHGVTSFLDLGFSVTMHDIDIALKQAFEQIFGPTIDVS.

In terms of domain architecture, BPL/LPL catalytic spans 54 to 242 (QNAPEQVWLL…AFEQIFGPTI (189 aa)). Residues 93–100 (RGGEFTYH), 173–175 (AIG), and 186–188 (GVS) each bind substrate. Cysteine 204 (acyl-thioester intermediate) is an active-site residue.

The protein belongs to the LipB family.

It is found in the cytoplasm. The enzyme catalyses octanoyl-[ACP] + L-lysyl-[protein] = N(6)-octanoyl-L-lysyl-[protein] + holo-[ACP] + H(+). The protein operates within protein modification; protein lipoylation via endogenous pathway; protein N(6)-(lipoyl)lysine from octanoyl-[acyl-carrier-protein]: step 1/2. Functionally, catalyzes the transfer of endogenously produced octanoic acid from octanoyl-acyl-carrier-protein onto the lipoyl domains of lipoate-dependent enzymes. Lipoyl-ACP can also act as a substrate although octanoyl-ACP is likely to be the physiological substrate. In Bartonella quintana (strain Toulouse) (Rochalimaea quintana), this protein is Octanoyltransferase.